A 257-amino-acid chain; its full sequence is Spermidine/putrescine transport system permease protein PotC (257 aa).

The Cytoplasmic segment spans residues Met-1–Arg-7. Residues Asn-8–Thr-27 form a helical membrane-spanning segment. The Periplasmic portion of the chain corresponds to Asn-28–Thr-65. Positions Ala-60–Ser-248 constitute an ABC transmembrane type-1 domain. The helical transmembrane segment at Ile-66 to Leu-85 threads the bilayer. Topologically, residues Tyr-86–Leu-100 are cytoplasmic. The helical transmembrane segment at Phe-101–Met-120 threads the bilayer. The Periplasmic segment spans residues Val-121–Phe-128. Residues Trp-129–Phe-148 form a helical membrane-spanning segment. The Cytoplasmic segment spans residues Ser-149–Ile-176. Residues Ile-177–Ser-196 form a helical membrane-spanning segment. Residues Leu-197–Asn-231 lie on the Periplasmic side of the membrane. The chain crosses the membrane as a helical span at residues Ala-232–Ile-251. Over Thr-252–His-257 the chain is Cytoplasmic.

It belongs to the binding-protein-dependent transport system permease family. CysTW subfamily.

Its subcellular location is the cell inner membrane. In terms of biological role, required for the activity of the bacterial periplasmic transport system of putrescine and spermidine. The sequence is that of Spermidine/putrescine transport system permease protein PotC (potC) from Haemophilus influenzae (strain ATCC 51907 / DSM 11121 / KW20 / Rd).